Reading from the N-terminus, the 139-residue chain is MNFNMSMICFALLLIVTLCSAYSVQQRQADSLRVAEIIRTSQDENTKINRIQELLTIYNRMAPSLRPAERARLDKFISEHTQEVLIDGVPTQGGSRMKIIRKALTPAAKDVATGFFTELGASIASIFTNWFKSSTEPSH.

Residues 1–21 form the signal peptide; the sequence is MNFNMSMICFALLLIVTLCSA.

Belongs to the Turandot family.

It localises to the secreted. A humoral factor that may play a role in stress tolerance. The chain is Protein Turandot B from Drosophila yakuba (Fruit fly).